A 464-amino-acid chain; its full sequence is Trigger factor (464 aa).

Residues 169–256 (GDVAIVDYRG…MKELKAKELP (88 aa)) enclose the PPIase FKBP-type domain.

Belongs to the FKBP-type PPIase family. Tig subfamily.

The protein resides in the cytoplasm. The enzyme catalyses [protein]-peptidylproline (omega=180) = [protein]-peptidylproline (omega=0). In terms of biological role, involved in protein export. Acts as a chaperone by maintaining the newly synthesized protein in an open conformation. Functions as a peptidyl-prolyl cis-trans isomerase. The sequence is that of Trigger factor from Microcystis aeruginosa (strain NIES-843 / IAM M-2473).